A 494-amino-acid polypeptide reads, in one-letter code: MANYFNTLNLRQQLDQLGRCRFMDRNEFATEADYLKGKKVVIVGCGAQGLNQGLNMRDSGLDVSYALRQAAIDEQRQSYKNAKENGFDVGSYEQLIPIADLVVNLTPDKQHSNVVETVMPLMKEGAALGYSHGFNIVEEGMQIRKDITVVMVAPKCPGTEVREEYKRGFGVPTLIAVHPENDPKGDGQEIAKAWAAATGGHRAGVLESSFVAEVKSDLMGEQTILCGMLQAGSIVCYEKMIADGIDAGYAGKLLQYGWETITEALKFGGITHMMDRLSNPAKVKAFELSEELKDLMRPLYNKHMDNIITGHFSSTMMADWANDDVNLLGWREETGETAFENYPVTDVEIPEQEYFDNGILMVAMVRAGVELAFEAMTASGIVEESAYYESLHELPLIANTVARKRLYEMNVVISDTAEYGNYLFANVATPLLREKFMTDVDTDVIGRGLGEVSNQVSNETLIVVNETLRSHPVELVGQELRGYMTDMKRIAVGD.

The region spanning L14 to S208 is the KARI N-terminal Rossmann domain. Residues C45–Q48, R68, R76, S78, and D108–Q110 contribute to the NADP(+) site. H132 is an active-site residue. G158 contacts NADP(+). KARI C-terminal knotted domains lie at S209–V344 and T345–M487. D217, E221, E389, and E393 together coordinate Mg(2+). A substrate-binding site is contributed by S414.

The protein belongs to the ketol-acid reductoisomerase family. The cofactor is Mg(2+).

The catalysed reaction is (2R)-2,3-dihydroxy-3-methylbutanoate + NADP(+) = (2S)-2-acetolactate + NADPH + H(+). It catalyses the reaction (2R,3R)-2,3-dihydroxy-3-methylpentanoate + NADP(+) = (S)-2-ethyl-2-hydroxy-3-oxobutanoate + NADPH + H(+). It participates in amino-acid biosynthesis; L-isoleucine biosynthesis; L-isoleucine from 2-oxobutanoate: step 2/4. Its pathway is amino-acid biosynthesis; L-valine biosynthesis; L-valine from pyruvate: step 2/4. Functionally, involved in the biosynthesis of branched-chain amino acids (BCAA). Catalyzes an alkyl-migration followed by a ketol-acid reduction of (S)-2-acetolactate (S2AL) to yield (R)-2,3-dihydroxy-isovalerate. In the isomerase reaction, S2AL is rearranged via a Mg-dependent methyl migration to produce 3-hydroxy-3-methyl-2-ketobutyrate (HMKB). In the reductase reaction, this 2-ketoacid undergoes a metal-dependent reduction by NADPH to yield (R)-2,3-dihydroxy-isovalerate. The sequence is that of Ketol-acid reductoisomerase (NADP(+)) from Photobacterium profundum (strain SS9).